Reading from the N-terminus, the 291-residue chain is Ribosomal RNA small subunit methyltransferase A (291 aa).

S-adenosyl-L-methionine contacts are provided by asparagine 29, leucine 31, glycine 56, glutamate 77, aspartate 102, and asparagine 127.

Belongs to the class I-like SAM-binding methyltransferase superfamily. rRNA adenine N(6)-methyltransferase family. RsmA subfamily.

The protein resides in the cytoplasm. It carries out the reaction adenosine(1518)/adenosine(1519) in 16S rRNA + 4 S-adenosyl-L-methionine = N(6)-dimethyladenosine(1518)/N(6)-dimethyladenosine(1519) in 16S rRNA + 4 S-adenosyl-L-homocysteine + 4 H(+). Its function is as follows. Specifically dimethylates two adjacent adenosines (A1518 and A1519) in the loop of a conserved hairpin near the 3'-end of 16S rRNA in the 30S particle. May play a critical role in biogenesis of 30S subunits. In Geobacillus sp. (strain WCH70), this protein is Ribosomal RNA small subunit methyltransferase A.